We begin with the raw amino-acid sequence, 312 residues long: Metaxin-1 homolog (312 aa).

The helical transmembrane segment at 282 to 302 (ILFTIGALVLSVAFAIHTGLI) threads the bilayer.

The protein belongs to the metaxin family. Associates with the mitochondrial contact site and cristae organizing system (MICOS) complex (also known as MINOS or MitOS complex).

Its subcellular location is the mitochondrion outer membrane. Involved in transport of proteins into the mitochondrion. Essential for embryonic development. The chain is Metaxin-1 homolog from Caenorhabditis briggsae.